Here is a 537-residue protein sequence, read N- to C-terminus: Eukaryotic translation initiation factor 3 subunit L (537 aa).

The segment covering Met1–Arg19 has biased composition (basic and acidic residues). A disordered region spans residues Met1–Asp28. Positions Glu297 to Pro485 constitute a PCI domain.

Belongs to the eIF-3 subunit L family. Component of the eukaryotic translation initiation factor 3 (eIF-3) complex.

Its subcellular location is the cytoplasm. Functionally, component of the eukaryotic translation initiation factor 3 (eIF-3) complex, which is involved in protein synthesis of a specialized repertoire of mRNAs and, together with other initiation factors, stimulates binding of mRNA and methionyl-tRNAi to the 40S ribosome. The eIF-3 complex specifically targets and initiates translation of a subset of mRNAs involved in cell proliferation. The chain is Eukaryotic translation initiation factor 3 subunit L from Caenorhabditis briggsae.